A 371-amino-acid chain; its full sequence is Cell division cycle-associated protein 7 (371 aa).

2 disordered regions span residues 60-110 and 140-188; these read TRSQ…EDES and PGSF…SRIL. A compositionally biased stretch (polar residues) spans 94–103; that stretch reads PSENSVTDSN. A Phosphoserine modification is found at Ser142. The interaction with MYC stretch occupies residues 146–170; sequence RHPLPGSDSQSRRPRRRTFPGVASR. A Nuclear localization signal motif is present at residues 160 to 176; that stretch reads RRRTFPGVASRRNPERR. Thr163 bears the Phosphothreonine mark. At Ser190 the chain carries Phosphoserine. Lys204 participates in a covalent cross-link: Glycyl lysine isopeptide (Lys-Gly) (interchain with G-Cter in SUMO2). The tract at residues 247 to 371 is mediates transcriptional activity; that stretch reads EEELENVCSN…SLKQEFEMQA (125 aa).

In terms of assembly, interacts with MYC (via C-terminus), YWHAE and YWHAZ. Phosphorylation at Thr-163 promotes interaction with YWHAE and YWHAZ, dissociation from MYC and sequestration in the cytoplasm. In vitro, phosphorylated at Thr-163 by AKT. Ubiquitous with higher level in thymus and small intestine. Overexpressed in a large number of tumors, in blood from patients with acute myelogenous leukemia (AML) and in chronic myelogenous leukemia (CML) blast crisis.

The protein localises to the nucleus. It localises to the cytoplasm. Its function is as follows. Participates in MYC-mediated cell transformation and apoptosis; induces anchorage-independent growth and clonogenicity in lymphoblastoid cells. Insufficient to induce tumorigenicity when overexpressed but contributes to MYC-mediated tumorigenesis. May play a role as transcriptional regulator. The polypeptide is Cell division cycle-associated protein 7 (CDCA7) (Homo sapiens (Human)).